A 506-amino-acid chain; its full sequence is Lysine--tRNA ligase (506 aa).

Residues Glu-416 and Glu-423 each coordinate Mg(2+).

The protein belongs to the class-II aminoacyl-tRNA synthetase family. Homodimer. It depends on Mg(2+) as a cofactor.

It is found in the cytoplasm. The catalysed reaction is tRNA(Lys) + L-lysine + ATP = L-lysyl-tRNA(Lys) + AMP + diphosphate. This chain is Lysine--tRNA ligase (lysS), found in Xylella fastidiosa (strain 9a5c).